Reading from the N-terminus, the 341-residue chain is Protein pelota homolog (341 aa).

Belongs to the eukaryotic release factor 1 family. Pelota subfamily. Monomer. A divalent metal cation is required as a cofactor.

It is found in the cytoplasm. In terms of biological role, may function in recognizing stalled ribosomes, interact with stem-loop structures in stalled mRNA molecules, and effect endonucleolytic cleavage of the mRNA. May play a role in the release non-functional ribosomes and degradation of damaged mRNAs. Has endoribonuclease activity. The protein is Protein pelota homolog of Methanospirillum hungatei JF-1 (strain ATCC 27890 / DSM 864 / NBRC 100397 / JF-1).